The following is a 342-amino-acid chain: L-threonine 3-dehydrogenase (342 aa).

A Zn(2+)-binding site is contributed by Cys-38. Residues Thr-40 and His-43 each act as charge relay system in the active site. Zn(2+) is bound by residues His-63, Glu-64, Cys-93, Cys-96, Cys-99, and Cys-107. NAD(+) is bound by residues Ile-175, Asp-195, Arg-200, 262-264 (LGI), and 286-287 (IY).

This sequence belongs to the zinc-containing alcohol dehydrogenase family. In terms of assembly, homotetramer. It depends on Zn(2+) as a cofactor.

The protein localises to the cytoplasm. The catalysed reaction is L-threonine + NAD(+) = (2S)-2-amino-3-oxobutanoate + NADH + H(+). It participates in amino-acid degradation; L-threonine degradation via oxydo-reductase pathway; glycine from L-threonine: step 1/2. Functionally, catalyzes the NAD(+)-dependent oxidation of L-threonine to 2-amino-3-ketobutyrate. The polypeptide is L-threonine 3-dehydrogenase (Aeromonas salmonicida (strain A449)).